The primary structure comprises 77 residues: Serine protease inhibitor 3 (77 aa).

The signal sequence occupies residues 1-17 (MMFTPLIVLTLLVLATA). 4 disulfides stabilise this stretch: C21–C53, C30–C48, C33–C44, and C55–C68. Residues 21–74 (CGPNEQWSGCPKCELQSGESDKPCATICGEPKCYCSPDKYRRIPDGRCIRKIQC) form the TIL domain.

Its subcellular location is the secreted. In terms of biological role, defends the organism against the host's proteinases. This Anisakis simplex (Herring worm) protein is Serine protease inhibitor 3.